A 656-amino-acid polypeptide reads, in one-letter code: Ankyrin repeat and SAM domain-containing protein 3 (656 aa).

The interval 1–422 (MSELSDEASE…AESSPQTQRA (422 aa)) is interaction with NEK7. 2 positions are modified to phosphoserine: serine 2 and serine 5. ANK repeat units lie at residues 34–64 (DVPL…DLNK), 68–97 (GGWT…SVNV), 101–130 (EGQT…ELEM), 134–163 (QGWT…NANV), 168–197 (CGFT…KVDA), and 201–220 (SGAT…IVAL). Asparagine 96 carries the 3-hydroxyasparagine modification. A phosphoserine mark is found at serine 201, serine 225, serine 243, serine 244, and serine 245. Disordered stretches follow at residues 235-265 (SPEK…GVSI) and 277-312 (GIGL…EEEG). Threonine 319 carries the post-translational modification Phosphothreonine. A phosphoserine mark is found at serine 320, serine 368, serine 371, and serine 375. Positions 346–425 (GPVQSSSSSE…SPQTQRAPYS (80 aa)) are disordered. One can recognise an SAM domain in the interval 425–488 (SGPQDLAALL…TSAIARWHSS (64 aa)). The stretch at 501–526 (ADRLEAEMQELAIQLHKRCEEVEATR) forms a coiled coil. Residue serine 541 is modified to Phosphoserine.

Homooligomer. Interacts (via SAM domain) with ANKS6 (via SAM domain). Interacts with BICC1. Interacts with NPHP1. Interacts with NEK8. Interacts with HIF1AN. Interacts with NEK7; this interaction alters the subcellular distribution of NEK7 by preventing its nuclear translocation. Post-translationally, hydroxylated at Asn-96, most probably by HIF1AN. Phosphorylations at Ser-5, Ser-225, Thr-319, Ser-320, Ser-368 and Ser-371 occur in a NEK7-dependent manner. In terms of processing, polyubiquitinated.

Its subcellular location is the cell projection. The protein resides in the cilium. It localises to the cytoplasm. May be involved in vasopressin signaling in the kidney. The protein is Ankyrin repeat and SAM domain-containing protein 3 (ANKS3) of Homo sapiens (Human).